The primary structure comprises 660 residues: MKTVVFAYHDMGCLGIEALLAAGYEISAIFTHTDNPGEKAFYGSVARLAAERGIPVYAPDNVNHPLWVERIAQLSPEVIFSFYYRHLICDEILQLAPAGAFNLHGSLLPKYRGRAPLNWVLVNGETETGVTLHRMVKRADAGAIVAQLRVAIAPDDIAITLHHKLCHAARQLLEQTLPAIKHGNILEIAQRENEATCFGRRTPDDSFLEWHKPASVLHNMVRAVADPWPGAFSYVGNQKFTVWSSRVHPHASKAQPGSVISVAPLLIACGDGALEIVTGQAGDGITMQGSQLAQTLGLVQGSRLNSQPACTARRRTRVLILGVNGFIGNHLTERLLREDHYEVYGLDIGSDAISRFLNHPHFHFVEGDISIHSEWIEYHVKKCDVVLPLVAIATPIEYTRNPLRVFELDFEENLRIIRYCVKYRKRIIFPSTSEVYGMCSDKYFDEDHSNLIVGPVNKPRWIYSVSKQLLDRVIWAYGEKEGLQFTLFRPFNWMGPRLDNLNAARIGSSRAITQLILNLVEGSPIKLIDGGKQKRCFTDIRDGIEALYRIIENAGNRCDGEIINIGNPENEASIEELGEMLLASFEKHPLRHHFPPFAGFRVVESSSYYGKGYQDVEHRKPSIRNAHHCLDWEPKIDMQETIDETLDFFLRTVDLTDKPS.

The tract at residues 1–304 (MKTVVFAYHD…TLGLVQGSRL (304 aa)) is formyltransferase ArnAFT. 86–88 (HLI) is a binding site for (6R)-10-formyltetrahydrofolate. His104 serves as the catalytic Proton donor; for formyltransferase activity. Residues Arg114 and 136-140 (VKRAD) each bind (6R)-10-formyltetrahydrofolate. A dehydrogenase ArnADH region spans residues 314-660 (RRTRVLILGV…RTVDLTDKPS (347 aa)). NAD(+)-binding positions include Asp347 and 368–369 (DI). Residues Ala393, Tyr398, and 432–433 (TS) contribute to the UDP-alpha-D-glucuronate site. Residue Glu434 is the Proton acceptor; for decarboxylase activity of the active site. UDP-alpha-D-glucuronate contacts are provided by residues Arg460, Asn492, 526-535 (KLIDGGKQKR), and Tyr613. The Proton donor; for decarboxylase activity role is filled by Arg619.

In the N-terminal section; belongs to the Fmt family. UDP-L-Ara4N formyltransferase subfamily. This sequence in the C-terminal section; belongs to the NAD(P)-dependent epimerase/dehydratase family. UDP-glucuronic acid decarboxylase subfamily. In terms of assembly, homohexamer, formed by a dimer of trimers.

The enzyme catalyses UDP-alpha-D-glucuronate + NAD(+) = UDP-beta-L-threo-pentopyranos-4-ulose + CO2 + NADH. It catalyses the reaction UDP-4-amino-4-deoxy-beta-L-arabinose + (6R)-10-formyltetrahydrofolate = UDP-4-deoxy-4-formamido-beta-L-arabinose + (6S)-5,6,7,8-tetrahydrofolate + H(+). The protein operates within nucleotide-sugar biosynthesis; UDP-4-deoxy-4-formamido-beta-L-arabinose biosynthesis; UDP-4-deoxy-4-formamido-beta-L-arabinose from UDP-alpha-D-glucuronate: step 1/3. It participates in nucleotide-sugar biosynthesis; UDP-4-deoxy-4-formamido-beta-L-arabinose biosynthesis; UDP-4-deoxy-4-formamido-beta-L-arabinose from UDP-alpha-D-glucuronate: step 3/3. Its pathway is bacterial outer membrane biogenesis; lipopolysaccharide biosynthesis. In terms of biological role, bifunctional enzyme that catalyzes the oxidative decarboxylation of UDP-glucuronic acid (UDP-GlcUA) to UDP-4-keto-arabinose (UDP-Ara4O) and the addition of a formyl group to UDP-4-amino-4-deoxy-L-arabinose (UDP-L-Ara4N) to form UDP-L-4-formamido-arabinose (UDP-L-Ara4FN). The modified arabinose is attached to lipid A and is required for resistance to polymyxin and cationic antimicrobial peptides. The sequence is that of Bifunctional polymyxin resistance protein ArnA from Escherichia coli O157:H7.